The primary structure comprises 207 residues: Ras-related protein Rab-7a (207 aa).

Residue threonine 2 is modified to N-acetylthreonine. GTP is bound by residues serine 17, glycine 18, valine 19, glycine 20, lysine 21, threonine 22, serine 23, serine 34, asparagine 35, tyrosine 37, and threonine 40. Threonine 22 provides a ligand contact to Mg(2+). A Switch 1 motif is present at residues 28–41; it reads YVNKKFSNQYKATI. Residues threonine 40 and aspartate 63 each coordinate Mg(2+). Residue glycine 66 coordinates GTP. The Switch 2 signature appears at 67-82; the sequence is QERFQSLSVAFYRGAD. Serine 72 carries the phosphoserine modification. GTP contacts are provided by asparagine 125, lysine 126, aspartate 128, alanine 156, and lysine 157. Glycyl lysine isopeptide (Lys-Gly) (interchain with G-Cter in ubiquitin) cross-links involve residues lysine 191 and lysine 194. S-geranylgeranyl cysteine attachment occurs at residues cysteine 205 and cysteine 207. Cysteine 207 carries the post-translational modification Cysteine methyl ester.

This sequence belongs to the small GTPase superfamily. Rab family. In terms of assembly, interacts with NTRK1/TRKA. Interacts with RILP. Interacts with PSMA7. Interacts with RNF115. Interacts with FYCO1. Interacts with the PIK3C3/VPS34-PIK3R4 complex. The GTP-bound form interacts with OSBPL1A. The GTP-bound form interacts with RAC1. Interacts with CLN3. Interacts with CHM, the substrate-binding subunit of the Rab geranylgeranyltransferase complex. Interacts with C9orf72. Does not interact with HPS4 and the BLOC-3 complex (heterodimer of HPS1 and HPS4). Interacts with CLN5. Interacts with PLEKHM1 (via N- and C-terminus). Interacts with PRPH; the interaction is direct. Interacts with VPS13A. The GDP-bound form interacts with RIMOC1. Interacts with the MON1A-CCZ1B complex and this interaction is enhanced in the presence of RIMOC1. Interacts with VPS39 and VPS41. Forms a ternary complex with LAMP2 and RUFY4; the interaction with LAMP2 is mediated by RUFY4 (via RUN and coiled coil domains). Mg(2+) is required as a cofactor. Post-translationally, deubiquitination at Lys-191 and Lys-194 by USP32. Phosphorylated at Ser-72 by LRRK1; phosphorylation is dependent on protein kinase C (PKC) activation of LRRK1. In terms of processing, prenylated. Prenylation is required for association with cellular membranes.

The protein resides in the cytoplasmic vesicle. It localises to the phagosome membrane. It is found in the late endosome membrane. Its subcellular location is the lysosome membrane. The protein localises to the melanosome membrane. The protein resides in the autophagosome membrane. It localises to the lipid droplet. It is found in the endosome membrane. Its subcellular location is the mitochondrion membrane. The enzyme catalyses GTP + H2O = GDP + phosphate + H(+). Its activity is regulated as follows. Regulated by guanine nucleotide exchange factors (GEFs) which promote the exchange of bound GDP for free GTP. Regulated by GTPase activating proteins (GAPs) which increase the GTP hydrolysis activity. Inhibited by GDP dissociation inhibitors (GDIs). In terms of biological role, the small GTPases Rab are key regulators of intracellular membrane trafficking, from the formation of transport vesicles to their fusion with membranes. Rabs cycle between an inactive GDP-bound form and an active GTP-bound form that is able to recruit to membranes different sets of downstream effectors directly responsible for vesicle formation, movement, tethering and fusion. In its active state, RAB7A binds to a variety of effector proteins playing a key role in the regulation of endo-lysosomal trafficking. Governs early-to-late endosomal maturation, microtubule minus-end as well as plus-end directed endosomal migration and positioning, and endosome-lysosome transport through different protein-protein interaction cascades. Also plays a central role in growth-factor-mediated cell signaling, nutrient-transporter-mediated nutrient uptake, neurotrophin transport in the axons of neurons and lipid metabolism. Also involved in regulation of some specialized endosomal membrane trafficking, such as maturation of melanosomes, pathogen-induced phagosomes (or vacuoles) and autophagosomes. Plays a role in the maturation and acidification of phagosomes that engulf pathogens, such as S.aureus and Mycobacteria. Plays a role in the fusion of phagosomes with lysosomes. In concert with RAC1, plays a role in regulating the formation of RBs (ruffled borders) in osteoclasts. Controls the endosomal trafficking and neurite outgrowth signaling of NTRK1/TRKA. Regulates the endocytic trafficking of the EGF-EGFR complex by regulating its lysosomal degradation. Involved in the ADRB2-stimulated lipolysis through lipophagy, a cytosolic lipase-independent autophagic pathway. Required for the exosomal release of SDCBP, CD63 and syndecan. Required for vesicular trafficking and cell surface expression of ACE2. May play a role in PRPH neuronal intermediate filament assembly. In Oryctolagus cuniculus (Rabbit), this protein is Ras-related protein Rab-7a (RAB7A).